We begin with the raw amino-acid sequence, 287 residues long: Inorganic pyrophosphatase (287 aa).

Residue Arg-79 participates in diphosphate binding. Positions 116, 121, and 153 each coordinate Mg(2+).

It belongs to the PPase family. In terms of assembly, homodimer. Mg(2+) serves as cofactor.

Its subcellular location is the cytoplasm. It carries out the reaction diphosphate + H2O = 2 phosphate + H(+). The sequence is that of Inorganic pyrophosphatase (IPP1) from Kluyveromyces lactis (strain ATCC 8585 / CBS 2359 / DSM 70799 / NBRC 1267 / NRRL Y-1140 / WM37) (Yeast).